The primary structure comprises 198 residues: MRQFIVTGHDAPTTPDFSLDDIAGGAGRLDVLCRCVNSAFFLSHDIREDVRVHLVLGDEYTVRFEGSELRRLNPDERSTAALIRKALEKREEAIGHMPAESSPGVSIRRMGFETTLEEAASDATVVELHEDGDPVVQVEPPENPLFVLSDHHDFTDEEAELLAAAADERVRLGPEILHADHSITVAHNYLDTAGYSRY.

Leucine 128 contributes to the S-adenosyl-L-methionine binding site.

It belongs to the methyltransferase superfamily. TrmY family. In terms of assembly, homodimer.

Its subcellular location is the cytoplasm. It catalyses the reaction pseudouridine(54) in tRNA + S-adenosyl-L-methionine = N(1)-methylpseudouridine(54) in tRNA + S-adenosyl-L-homocysteine + H(+). Functionally, specifically catalyzes the N1-methylation of pseudouridine at position 54 (Psi54) in tRNAs. The sequence is that of tRNA (pseudouridine(54)-N(1))-methyltransferase from Haloferax volcanii (strain ATCC 29605 / DSM 3757 / JCM 8879 / NBRC 14742 / NCIMB 2012 / VKM B-1768 / DS2) (Halobacterium volcanii).